The chain runs to 715 residues: Interferon-induced GTP-binding protein Mx2 (715 aa).

The 273-residue stretch at Asp-115–Pro-387 folds into the Dynamin-type G domain. The interval Gly-125–Ser-132 is G1 motif. Position 125-132 (Gly-125–Ser-132) interacts with GTP. The G2 motif stretch occupies residues Val-150–Arg-152. Residues Asp-225 to Gly-228 are G3 motif. GTP is bound by residues Asp-225–Ile-229 and Thr-294–Asp-297. Residues Thr-294–Asp-297 form a G4 motif region. The tract at residues Lys-326–Gly-329 is G5 motif. One can recognise a GED domain in the interval Phe-623–Ile-714.

It belongs to the TRAFAC class dynamin-like GTPase superfamily. Dynamin/Fzo/YdjA family.

It localises to the cytoplasm. The protein resides in the nucleus. Its subcellular location is the nuclear pore complex. Interferon-induced dynamin-like GTPase with potent antiviral activity against human immunodeficiency virus type 1 (HIV-1). Acts by targeting the viral capsid and affects the nuclear uptake and/or stability of the HIV-1 replication complex and the subsequent chromosomal integration of the proviral DNA. Exhibits antiviral activity also against simian immunodeficiency virus (SIV-mnd). May play a role in regulating nucleocytoplasmic transport and cell-cycle progression. The protein is Interferon-induced GTP-binding protein Mx2 (MX2) of Homo sapiens (Human).